A 395-amino-acid polypeptide reads, in one-letter code: THAP domain-containing protein 5 (395 aa).

The THAP-type zinc-finger motif lies at 1–84; the sequence is MPRYCAAICC…LKQTAVPTIF (84 aa). Residues 85 to 112 are disordered; the sequence is SLPEDNQGKDPSKKKSQKKNLEDEKEVC. Residues 90-112 show a composition bias toward basic and acidic residues; the sequence is NQGKDPSKKKSQKKNLEDEKEVC. The short motif at 321–324 is the HCFC1-binding motif (HBM) element; sequence EHSY. A coiled-coil region spans residues 348–382; sequence LELKEQQTLGRLKSLEALIRQLKQENWLSEENVKI.

Interacts with HTRA2; under apoptotic conditions. Interacts with ABRAXAS2. Post-translationally, cleaved by HTRA2 during apoptosis. As to expression, detected in heart. Detected in brain and muscle (at protein level). Highly expressed in the heart. Also found in brain and skeletal muscle.

The protein resides in the nucleus. Has sequence-specific DNA-binding activity and can function as transcriptional repressor (in vitro). May be a regulator of cell cycle: THAP5 overexpression in human cell lines causes cell cycle arrest at G2/M phase. The sequence is that of THAP domain-containing protein 5 (THAP5) from Homo sapiens (Human).